A 476-amino-acid chain; its full sequence is Aspartyl/glutamyl-tRNA(Asn/Gln) amidotransferase subunit B (476 aa).

This sequence belongs to the GatB/GatE family. GatB subfamily. Heterotrimer of A, B and C subunits.

It catalyses the reaction L-glutamyl-tRNA(Gln) + L-glutamine + ATP + H2O = L-glutaminyl-tRNA(Gln) + L-glutamate + ADP + phosphate + H(+). It carries out the reaction L-aspartyl-tRNA(Asn) + L-glutamine + ATP + H2O = L-asparaginyl-tRNA(Asn) + L-glutamate + ADP + phosphate + 2 H(+). Its function is as follows. Allows the formation of correctly charged Asn-tRNA(Asn) or Gln-tRNA(Gln) through the transamidation of misacylated Asp-tRNA(Asn) or Glu-tRNA(Gln) in organisms which lack either or both of asparaginyl-tRNA or glutaminyl-tRNA synthetases. The reaction takes place in the presence of glutamine and ATP through an activated phospho-Asp-tRNA(Asn) or phospho-Glu-tRNA(Gln). The chain is Aspartyl/glutamyl-tRNA(Asn/Gln) amidotransferase subunit B from Lactobacillus helveticus (strain DPC 4571).